The following is a 701-amino-acid chain: Polyribonucleotide nucleotidyltransferase (701 aa).

Mg(2+) is bound by residues aspartate 487 and aspartate 493. One can recognise a KH domain in the interval 554-613; the sequence is PTMIAMKIDTDKIRDVIGKGGATIRAICEETKASIDIEDDGSIKIFGETKEAADAAKQRI. Residues 623 to 691 form the S1 motif domain; that stretch reads GKIYVGKVER…NRGRIKLSIK (69 aa).

It belongs to the polyribonucleotide nucleotidyltransferase family. In terms of assembly, component of the RNA degradosome, which is a multiprotein complex involved in RNA processing and mRNA degradation. It depends on Mg(2+) as a cofactor.

It localises to the cytoplasm. It carries out the reaction RNA(n+1) + phosphate = RNA(n) + a ribonucleoside 5'-diphosphate. Involved in mRNA degradation. Catalyzes the phosphorolysis of single-stranded polyribonucleotides processively in the 3'- to 5'-direction. The protein is Polyribonucleotide nucleotidyltransferase of Pseudomonas putida (Arthrobacter siderocapsulatus).